Reading from the N-terminus, the 692-residue chain is Ino eighty subunit 1 (692 aa).

Positions 1–25 (MGKRVYDPIHDTFQLREDNSDETKA) are enriched in basic and acidic residues. The tract at residues 1–133 (MGKRVYDPIH…RHLKKPDGEP (133 aa)) is disordered. Residue serine 27 is modified to Phosphoserine. Polar residues predominate over residues 28-56 (PMQSVKSGSQEEASPSSIQSETETVTTKS). The span at 64 to 80 (EIDDKNDDDSTQSEEEN) shows a compositional bias: acidic residues. Over residues 97–109 (GASTATGPVTTNT) the composition is skewed to polar residues. A coiled-coil region spans residues 340-385 (SKYVEVESKAQEQDMVDEQNEVKETEAENEKQESKAAYATTLFDIL). Positions 465–485 (FMSKMEEGRKRERTNVTEVKK) are enriched in basic and acidic residues. Positions 465-550 (FMSKMEEGRK…VTPAAPTETE (86 aa)) are disordered. 3 positions are modified to phosphoserine: serine 487, serine 493, and serine 504. A compositionally biased stretch (acidic residues) spans 493–504 (SEEDGEGEDDKS). At threonine 507 the chain carries Phosphothreonine. Residues 513 to 528 (SLLTPTPILESSSPMT) show a composition bias toward polar residues.

In terms of assembly, component of the chromatin-remodeling INO80 complex, at least composed of ARP4, ARP5, ARP8, RVB1, RVB2, TAF14, NHP10, IES1, IES3, IES4, IES6, ACT1, IES2, IES5 and INO80.

The protein localises to the nucleus. Its function is as follows. Probably involved in transcription regulation via its interaction with the INO80 complex, a chromatin-remodeling complex. The protein is Ino eighty subunit 1 (IES1) of Saccharomyces cerevisiae (strain ATCC 204508 / S288c) (Baker's yeast).